Reading from the N-terminus, the 418-residue chain is Pestheic acid cluster transcriptional regulator 1 (418 aa).

Residues 244–272 (GTAVTTTATTSSSFISKSSEEPSPKRIKP) are disordered. The span at 245-260 (TAVTTTATTSSSFISK) shows a compositional bias: low complexity.

Its subcellular location is the nucleus. Its function is as follows. Transcription factor that, with ptaR2 and ptaR3, coregulates the expression of the gene cluster that mediates the biosynthesis of pestheic acid, a diphenyl ether which is a biosynthetic precursor of the unique chloropupukeananes. The protein is Pestheic acid cluster transcriptional regulator 1 of Pestalotiopsis fici (strain W106-1 / CGMCC3.15140).